The chain runs to 69 residues: U2-agatoxin-Ao1e (69 aa).

An N-terminal signal peptide occupies residues 1 to 20 (MRAIISVLLISAMVFSIIEA). A propeptide spanning residues 21–34 (VPLEEGLQLFEAER) is cleaved from the precursor. 3 cysteine pairs are disulfide-bonded: Cys37–Cys53, Cys44–Cys58, and Cys52–Cys68.

This sequence belongs to the neurotoxin 01 (U2-agtx) family. In terms of tissue distribution, expressed by the venom gland.

The protein resides in the secreted. Its function is as follows. Insect active toxin causing rapid but reversible paralysis in crickets. No activity shown in mammals. Does not show effect on mammalian voltage-gated calcium channels. The protein is U2-agatoxin-Ao1e of Agelena orientalis (Funnel-web spider).